A 218-amino-acid polypeptide reads, in one-letter code: Probable transaldolase 2 (218 aa).

Catalysis depends on K83, which acts as the Schiff-base intermediate with substrate.

The protein belongs to the transaldolase family. Type 3B subfamily.

It localises to the cytoplasm. The enzyme catalyses D-sedoheptulose 7-phosphate + D-glyceraldehyde 3-phosphate = D-erythrose 4-phosphate + beta-D-fructose 6-phosphate. The protein operates within carbohydrate degradation; pentose phosphate pathway; D-glyceraldehyde 3-phosphate and beta-D-fructose 6-phosphate from D-ribose 5-phosphate and D-xylulose 5-phosphate (non-oxidative stage): step 2/3. Its function is as follows. Transaldolase is important for the balance of metabolites in the pentose-phosphate pathway. The polypeptide is Probable transaldolase 2 (Listeria innocua serovar 6a (strain ATCC BAA-680 / CLIP 11262)).